Reading from the N-terminus, the 408-residue chain is MFSCFNNLGLDYCYQCMHGPEGCMVPSRQGDGGELYAHSEELEAKLRGLAKKESLEIEKSLENDKKTYGSHIKILILGGPSSGKSTIFKQMQIIHSNGFKTEQELIQYRGLIDTNIRQTYRQLVSGARVVGISLESLESLVHDINKVYAPMAADEFSIRTIPDVVEPLTAFWNSREIQEVYKRRYEFELLDSTKYYLENLNRISKSDYLPNEEDIVHSRKATVSINSIVFQYTGVSLLMVDVGGQRSERKKWLHLFDDAKVVIFVIDLTGYAKKSEESRTELSRFPNFFNEIGNDAFDMKVALKIFNDVAGSHALANAVFLLFFNKVDLFKELLPQVSLQPCFSKFAEENSYDNTSKFICDKFIRAAKPKKSVFPHFTTATNTENIKMVFRACMESVFKANSKATGLS.

GTP-binding positions include 38–45, 78–85, 201–205, 216–222, 241–245, 285–288, 325–328, and alanine 380; these read HSEELEAK, GGPSSGKS, NRISK, VHSRKAT, DVGGQ, FPNF, and NKVD. The G-alpha domain maps to 70–408; it reads SHIKILILGG…KANSKATGLS (339 aa). A G1 motif region spans residues 73–86; that stretch reads KILILGGPSSGKST. Serine 85 serves as a coordination point for Mg(2+). The interval 214 to 222 is G2 motif; sequence DIVHSRKAT. A Mg(2+)-binding site is contributed by threonine 222. The tract at residues 237 to 246 is G3 motif; sequence LLMVDVGGQR. Residues 321-328 are G4 motif; sequence LLFFNKVD. The tract at residues 378 to 383 is G5 motif; that stretch reads TTATNT.

This sequence belongs to the G-alpha family. G proteins are composed of 3 units; alpha, beta and gamma. The alpha chain contains the guanine nucleotide binding site.

In terms of biological role, guanine nucleotide-binding proteins (G proteins) are involved as modulators or transducers in various transmembrane signaling systems. This Caenorhabditis briggsae protein is Guanine nucleotide-binding protein alpha-14 subunit (gpa-14).